Consider the following 316-residue polypeptide: Acetyl-coenzyme A carboxylase carboxyl transferase subunit beta (316 aa).

Residues 29–298 form the CoA carboxyltransferase N-terminal domain; it reads LWTKCPNCGV…LLSPLNSHHH (270 aa). Residues Cys33, Cys36, Cys52, and Cys55 each coordinate Zn(2+). A C4-type zinc finger spans residues 33–55; sequence CPNCGVLAYTKDLLANQLVCLDC.

The protein belongs to the AccD/PCCB family. Acetyl-CoA carboxylase is a heterohexamer composed of biotin carboxyl carrier protein (AccB), biotin carboxylase (AccC) and two subunits each of ACCase subunit alpha (AccA) and ACCase subunit beta (AccD). It depends on Zn(2+) as a cofactor.

It is found in the cytoplasm. It catalyses the reaction N(6)-carboxybiotinyl-L-lysyl-[protein] + acetyl-CoA = N(6)-biotinyl-L-lysyl-[protein] + malonyl-CoA. It participates in lipid metabolism; malonyl-CoA biosynthesis; malonyl-CoA from acetyl-CoA: step 1/1. Its function is as follows. Component of the acetyl coenzyme A carboxylase (ACC) complex. Biotin carboxylase (BC) catalyzes the carboxylation of biotin on its carrier protein (BCCP) and then the CO(2) group is transferred by the transcarboxylase to acetyl-CoA to form malonyl-CoA. The polypeptide is Acetyl-coenzyme A carboxylase carboxyl transferase subunit beta (Microcystis aeruginosa (strain NIES-843 / IAM M-2473)).